The sequence spans 210 residues: Large ribosomal subunit protein uL3 (210 aa).

Residues Gly121–Gly150 are disordered.

Belongs to the universal ribosomal protein uL3 family. In terms of assembly, part of the 50S ribosomal subunit. Forms a cluster with proteins L14 and L19.

In terms of biological role, one of the primary rRNA binding proteins, it binds directly near the 3'-end of the 23S rRNA, where it nucleates assembly of the 50S subunit. In Pelotomaculum thermopropionicum (strain DSM 13744 / JCM 10971 / SI), this protein is Large ribosomal subunit protein uL3.